We begin with the raw amino-acid sequence, 91 residues long: Small ribosomal subunit protein uS19 (91 aa).

It belongs to the universal ribosomal protein uS19 family.

Protein S19 forms a complex with S13 that binds strongly to the 16S ribosomal RNA. The polypeptide is Small ribosomal subunit protein uS19 (Burkholderia cenocepacia (strain HI2424)).